Here is a 37-residue protein sequence, read N- to C-terminus: MKVRVSIKPICDKCKIIKRHGKIRVICENPKHKQVQG.

It belongs to the bacterial ribosomal protein bL36 family.

The sequence is that of Large ribosomal subunit protein bL36 (rpmJ) from Fusobacterium nucleatum subsp. nucleatum (strain ATCC 25586 / DSM 15643 / BCRC 10681 / CIP 101130 / JCM 8532 / KCTC 2640 / LMG 13131 / VPI 4355).